Consider the following 938-residue polypeptide: Histone deacetylase 7 (938 aa).

The disordered stretch occupies residues 1–40 (MHSPGAGCPALQPDTPGSQPQPMDLRVGQRPTVEPPPEPA). Residues 1–121 (MHSPGAGCPA…LAEVILKKQQ (121 aa)) form an interaction with MEF2C region. 2 transcription repression regions span residues 2 to 254 (HSPG…DGDR) and 241 to 533 (GPNP…EHAG). The interval 72–172 (SMDPPMPELQ…LPTEPPEHFP (101 aa)) is interaction with MEF2A. Residue serine 132 is modified to Phosphoserine. 4 disordered regions span residues 155–280 (SFLP…HHGL), 331–361 (SGSG…APLQ), 373–463 (LIKP…DSVL), and 472–491 (RPLS…LSPE). Serine 178 carries the phosphoserine; by MARK2, MARK3 and PKD/PRKD1 modification. Basic and acidic residues predominate over residues 190-204 (KSLERRKNPLLRKES). Serine 204 is subject to Phosphoserine; by PKD/PRKD2. Residues 220–235 (SSPSSSSTPASGCSSP) show a composition bias toward low complexity. Serine 344 is modified (phosphoserine; by PKD/PRKD1). 2 positions are modified to phosphoserine: serine 350 and serine 398. A compositionally biased stretch (low complexity) spans 350–361 (SATASPLLAPLQ). Low complexity-rich tracts occupy residues 429-448 (GRGS…EQQH) and 479-491 (SSPA…LSPE). A Phosphoserine; by PKD/PRKD1 modification is found at serine 479. The residue at position 480 (serine 480) is a Phosphoserine. A histone deacetylase region spans residues 505–852 (PATGLVYDSV…VAALLGNKVD (348 aa)). Positions 520, 522, and 528 each coordinate Zn(2+). Serine 582 carries the post-translational modification Phosphoserine. Cysteine 605 is a binding site for Zn(2+). Histidine 657 is an active-site residue. Residues 864–938 (NLSAIRSLEA…LVEEEEPMNL (75 aa)) form an interaction with SIN3A region. The Nuclear export signal signature appears at 904–938 (AEVEAVTALASLSVGILAEDRPSERLVEEEEPMNL).

The protein belongs to the histone deacetylase family. HD type 2 subfamily. In terms of assembly, interacts with HDAC1, HDAC2, HDAC3, HDAC4, HDAC5, NCOR1, NCOR2, SIN3A, SIN3B, RBBP4, RBBP7, MTA1L1, SAP30 and MBD3. Interacts with KAT5 and EDNRA. Interacts with the 14-3-3 protein YWHAE, MEF2A, MEF2B and MEF2C. Interacts with ZMYND15. Interacts with KDM5B. Interacts with PML. Interacts with FOXP3. Interacts with RARA. May be phosphorylated by CaMK1. Phosphorylated by the PKC kinases PKN1 and PKN2, impairing nuclear import. Phosphorylation at Ser-178 by MARK2, MARK3 and PRKD1 promotes interaction with 14-3-3 proteins and export from the nucleus. Phosphorylation at Ser-178 is a prerequisite for phosphorylation at Ser-204. In terms of tissue distribution, highly expressed in heart and lung. Expressed at intermediate level in muscle.

It is found in the nucleus. It localises to the cytoplasm. It carries out the reaction N(6)-acetyl-L-lysyl-[histone] + H2O = L-lysyl-[histone] + acetate. It catalyses the reaction N(6)-acetyl-L-lysyl-[protein] + H2O = L-lysyl-[protein] + acetate. Its activity is inhibited by Trichostatin A (TSA), a known histone deacetylase inhibitor. Its function is as follows. Responsible for the deacetylation of lysine residues on the N-terminal part of the core histones (H2A, H2B, H3 and H4). Histone deacetylation gives a tag for epigenetic repression and plays an important role in transcriptional regulation, cell cycle progression and developmental events. Histone deacetylases act via the formation of large multiprotein complexes. Involved in muscle maturation by repressing transcription of myocyte enhancer factors such as MEF2A, MEF2B and MEF2C. During muscle differentiation, it shuttles into the cytoplasm, allowing the expression of myocyte enhancer factors. Positively regulates the transcriptional repressor activity of FOXP3. Serves as a corepressor of RARA, causing its deacetylation and inhibition of RARE DNA element binding. In association with RARA, plays a role in the repression of microRNA-10a and thereby in the inflammatory response. Also acetylates non-histone proteins, such as ALKBH5. The protein is Histone deacetylase 7 (Hdac7) of Mus musculus (Mouse).